The chain runs to 166 residues: Ribosome maturation factor RimP (166 aa).

It belongs to the RimP family.

Its subcellular location is the cytoplasm. Required for maturation of 30S ribosomal subunits. The polypeptide is Ribosome maturation factor RimP (Psychrobacter arcticus (strain DSM 17307 / VKM B-2377 / 273-4)).